Consider the following 169-residue polypeptide: Myosin regulatory light chain 11 (169 aa).

Ala-2 is subject to N,N,N-trimethylalanine. Phosphoserine is present on residues Ser-15 and Ser-16. 2 positions are modified to phosphothreonine: Thr-25 and Thr-35. One can recognise an EF-hand 1 domain in the interval 25-60; the sequence is TQIQEFKEAFTVIDQNRDGIIDKEDLRDTFAAMGRL. Residues Asp-38, Asn-40, Asp-42, and Asp-49 each contribute to the Ca(2+) site. Ser-75 carries the post-translational modification Phosphoserine. 2 consecutive EF-hand domains span residues 95–130 and 131–166; these read DPEDVITGAFKVLDPEGKGTIKKKFLEELLTTQCDR and FSQEEIKNMWAAFPPDVGGNVDYKNICYVITHGDAK. Thr-101 is subject to Phosphothreonine.

As to quaternary structure, myosin is a hexamer of 2 heavy chains and 4 light chains. Expressed in fetal and adult skeletal muscle.

In terms of biological role, myosin regulatory subunit that plays an essential role to maintain muscle integrity during early development. Plays a role in muscle contraction. The polypeptide is Myosin regulatory light chain 11 (Homo sapiens (Human)).